Reading from the N-terminus, the 88-residue chain is Secretion system apparatus protein SsaS (88 aa).

2 consecutive transmembrane segments (helical) span residues 15-35 (WIVLFTSMPVVLVASVVGVIV) and 55-75 (LLAIAITLMVSYPWLSGILLN).

Belongs to the FliQ/MopD/SpaQ family.

It is found in the cell membrane. Functionally, part of a type III secretion system. The polypeptide is Secretion system apparatus protein SsaS (ssaS) (Salmonella typhimurium (strain LT2 / SGSC1412 / ATCC 700720)).